Here is a 1755-residue protein sequence, read N- to C-terminus: Transposon Ty1-ML1 Gag-Pol polyprotein (1755 aa).

Composition is skewed to polar residues over residues 1–23 (MESQ…SVTS), 48–60 (TKAN…TPAS), and 127–152 (QSQF…GNTF). 3 disordered regions span residues 1 to 88 (MESQ…YPQQ), 126 to 173 (PQSQ…RPPP), and 352 to 421 (GSRN…SKST). Over residues 153 to 165 (TDSSSADSDMTST) the composition is skewed to low complexity. Positions 299-401 (NNGIHINNKV…NSKSKTARAH (103 aa)) are RNA-binding. Over residues 402-418 (NVSTSNNSPSTDNDSIS) the composition is skewed to low complexity. The For protease activity; shared with dimeric partner role is filled by Asp-461. Residues 583-640 (NVHTSESTRKYPYPFIHRMLAHANAQTIRYSLKNNTITYFNESDVDWSSAIDYQCPDC) form an integrase-type zinc finger-like region. Positions 660 to 835 (NSYEPFQYLH…AGLDISTLLP (176 aa)) constitute an Integrase catalytic domain. Positions 671 and 736 each coordinate Mg(2+). Disordered stretches follow at residues 956-1087 (SKAV…ETEK), 1092-1111 (RSPS…NIVP), and 1130-1171 (DLPL…DSNA). Residues 960-969 (SPTDSTPPST) show a composition bias toward low complexity. Residues 1005-1015 (STPQISNIEST) are compositionally biased toward polar residues. Basic and acidic residues predominate over residues 1038–1053 (ESSHASKSKDFRHSDS). Polar residues-rich tracts occupy residues 1054–1082 (YSEN…QISD) and 1101–1111 (PENNSSHNIVP). The short motif at 1178–1212 (KKRSLEDNETEIKVSRDTWNTKNMRSLEPPRSKKR) is the Bipartite nuclear localization signal element. Residues 1338-1476 (NNYYITQLDI…DILGLEIKYQ (139 aa)) enclose the Reverse transcriptase Ty1/copia-type domain. Asp-1346, Asp-1427, Asp-1428, Asp-1610, Glu-1652, and Asp-1685 together coordinate Mg(2+). Residues 1610–1752 (DASYGNQPYY…IKTFKLLTNK (143 aa)) form the RNase H Ty1/copia-type domain.

As to quaternary structure, the capsid protein forms a homotrimer, from which the VLPs are assembled. The protease is a homodimer, whose active site consists of two apposed aspartic acid residues. In terms of processing, initially, virus-like particles (VLPs) are composed of the structural unprocessed proteins Gag and Gag-Pol, and also contain the host initiator methionine tRNA (tRNA(i)-Met) which serves as a primer for minus-strand DNA synthesis, and a dimer of genomic Ty RNA. Processing of the polyproteins occurs within the particle and proceeds by an ordered pathway, called maturation. First, the protease (PR) is released by autocatalytic cleavage of the Gag-Pol polyprotein yielding capsid protein p45 and a Pol-p154 precursor protein. This cleavage is a prerequisite for subsequent processing of Pol-p154 at the remaining sites to release the mature structural and catalytic proteins. Maturation takes place prior to the RT reaction and is required to produce transposition-competent VLPs.

The protein resides in the cytoplasm. It localises to the nucleus. It catalyses the reaction DNA(n) + a 2'-deoxyribonucleoside 5'-triphosphate = DNA(n+1) + diphosphate. The catalysed reaction is Endonucleolytic cleavage to 5'-phosphomonoester.. Its function is as follows. Capsid protein (CA) is the structural component of the virus-like particle (VLP), forming the shell that encapsulates the retrotransposons dimeric RNA genome. The particles are assembled from trimer-clustered units and there are holes in the capsid shells that allow for the diffusion of macromolecules. CA also has nucleocapsid-like chaperone activity, promoting primer tRNA(i)-Met annealing to the multipartite primer-binding site (PBS), dimerization of Ty1 RNA and initiation of reverse transcription. The aspartyl protease (PR) mediates the proteolytic cleavages of the Gag and Gag-Pol polyproteins after assembly of the VLP. In terms of biological role, reverse transcriptase/ribonuclease H (RT) is a multifunctional enzyme that catalyzes the conversion of the retro-elements RNA genome into dsDNA within the VLP. The enzyme displays a DNA polymerase activity that can copy either DNA or RNA templates, and a ribonuclease H (RNase H) activity that cleaves the RNA strand of RNA-DNA heteroduplexes during plus-strand synthesis and hydrolyzes RNA primers. The conversion leads to a linear dsDNA copy of the retrotransposon that includes long terminal repeats (LTRs) at both ends. Functionally, integrase (IN) targets the VLP to the nucleus, where a subparticle preintegration complex (PIC) containing at least integrase and the newly synthesized dsDNA copy of the retrotransposon must transit the nuclear membrane. Once in the nucleus, integrase performs the integration of the dsDNA into the host genome. The protein is Transposon Ty1-ML1 Gag-Pol polyprotein (TY1B-ML1) of Saccharomyces cerevisiae (strain ATCC 204508 / S288c) (Baker's yeast).